The chain runs to 75 residues: Endogenous retrovirus group K member 5 Np9 protein (75 aa).

The interval 22–43 is disordered; sequence TAPKRQRPSRTGHDDDGGFVEK. The span at 32–43 shows a compositional bias: basic and acidic residues; the sequence is TGHDDDGGFVEK.

The protein resides in the nucleus. Functionally, may possess a function in tumorigenesis. The sequence is that of Endogenous retrovirus group K member 5 Np9 protein (ERVK-5) from Homo sapiens (Human).